A 392-amino-acid chain; its full sequence is O-phospho-L-seryl-tRNA:Cys-tRNA synthase 2 (392 aa).

Residues 85 to 86 (AR), asparagine 190, and 213 to 215 (SGH) each bind pyridoxal 5'-phosphate. Lysine 216 bears the N6-(pyridoxal phosphate)lysine mark.

It belongs to the SepCysS family. As to quaternary structure, homodimer. Interacts with SepRS. Pyridoxal 5'-phosphate is required as a cofactor.

It catalyses the reaction O-phospho-L-seryl-tRNA(Cys) + hydrogen sulfide + H(+) = L-cysteinyl-tRNA(Cys) + phosphate. In terms of biological role, converts O-phospho-L-seryl-tRNA(Cys) (Sep-tRNA(Cys)) to L-cysteinyl-tRNA(Cys) (Cys-tRNA(Cys)). The polypeptide is O-phospho-L-seryl-tRNA:Cys-tRNA synthase 2 (Methanocorpusculum labreanum (strain ATCC 43576 / DSM 4855 / Z)).